The sequence spans 1137 residues: Otoancorin (1137 aa).

The N-terminal stretch at 1–23 (MSQGPRTCSLLLVLLLSHGGAYQ) is a signal peptide. Residues Asn-156, Asn-211, Asn-244, Asn-289, Asn-321, Asn-380, Asn-384, Asn-530, Asn-594, Asn-740, and Asn-798 are each glycosylated (N-linked (GlcNAc...) asparagine). The segment covering 1095–1115 (HSWQTDPLSSSPTWPASTGSP) has biased composition (polar residues). Residues 1095-1119 (HSWQTDPLSSSPTWPASTGSPTGEP) are disordered. A lipid anchor (GPI-anchor amidated glycine) is attached at Gly-1113. Residues 1114–1137 (SPTGEPASQALWLGCTLLLLTAKS) constitute a propeptide, removed in mature form.

It belongs to the stereocilin family. In terms of tissue distribution, expressed in the inner ear and vestibule.

It is found in the apical cell membrane. Its subcellular location is the secreted. The protein localises to the extracellular space. It localises to the extracellular matrix. Functionally, may act as an adhesion molecule. In Mus musculus (Mouse), this protein is Otoancorin (Otoa).